Here is a 421-residue protein sequence, read N- to C-terminus: Protein MID1-COMPLEMENTING ACTIVITY 1 (421 aa).

Residues Arg-188 to Val-218 adopt a coiled-coil conformation. The disordered stretch occupies residues Glu-233–Ser-288. Residues Asp-235–Ser-252 are compositionally biased toward basic and acidic residues. A compositionally biased stretch (low complexity) spans Thr-270–Ser-282. A helical membrane pass occupies residues Leu-346–Val-362.

As to expression, expressed in roots, leaves, stems, flowers and siliques. Expressed in vascular tissues of cotyledons, leaves and primary root, in the promeristem and adjacent elongation zone of the primary root and in the shoot apical meristem. Detected in the stele and endodermis, but not in the cortex, epidermis or root cap, including the columella. Not expressed in root hairs or in mesophyll cells of leaves and cotyledons.

It localises to the cell membrane. Its activity is regulated as follows. Inhibited by GdCl(3), but not by verapamil. In terms of biological role, calcium-permeable stretch-activated channel component. Involved in mechano-stimulated calcium uptake mechanism and in mechanosensing in the primary root. This is Protein MID1-COMPLEMENTING ACTIVITY 1 (MCA1) from Arabidopsis thaliana (Mouse-ear cress).